Reading from the N-terminus, the 40-residue chain is Ostricacin-3 (40 aa).

Disulfide bonds link C8-C36, C15-C30, and C20-C37.

The protein resides in the secreted. In terms of biological role, has antibacterial activity against the Gram-positive bacterium S.aureus 1056 MRSA (MIC=2.78 ug/ml) and the Gram-negative bacterium E.coli O157:H7 (MIC=2.41 ug/ml). Does not have antifungal activity against the yeast C.albicans 3153A. The polypeptide is Ostricacin-3 (Struthio camelus (Common ostrich)).